A 126-amino-acid polypeptide reads, in one-letter code: Cytochrome c2 (126 aa).

Positions 17, 20, 21, and 101 each coordinate heme c.

The protein belongs to the cytochrome c family. In terms of processing, binds 1 heme c group covalently per subunit.

The protein localises to the periplasm. Functionally, cytochrome c2 is found mainly in purple, non-sulfur, photosynthetic bacteria where it functions as the electron donor to the oxidized bacteriochlorophyll in the photophosphorylation pathway. However, it may also have a role in the respiratory chain and is found in some non-photosynthetic bacteria. The protein is Cytochrome c2 of Rhodovulum adriaticum (Rhodopseudomonas adriatica).